Consider the following 438-residue polypeptide: Thymidine phosphorylase (438 aa).

Belongs to the thymidine/pyrimidine-nucleoside phosphorylase family. In terms of assembly, homodimer.

It carries out the reaction thymidine + phosphate = 2-deoxy-alpha-D-ribose 1-phosphate + thymine. Its pathway is pyrimidine metabolism; dTMP biosynthesis via salvage pathway; dTMP from thymine: step 1/2. In terms of biological role, the enzymes which catalyze the reversible phosphorolysis of pyrimidine nucleosides are involved in the degradation of these compounds and in their utilization as carbon and energy sources, or in the rescue of pyrimidine bases for nucleotide synthesis. The polypeptide is Thymidine phosphorylase (Sinorhizobium fredii (strain NBRC 101917 / NGR234)).